Here is a 270-residue protein sequence, read N- to C-terminus: UPF0354 protein BPUM_2629 (270 aa).

Belongs to the UPF0354 family.

The protein is UPF0354 protein BPUM_2629 of Bacillus pumilus (strain SAFR-032).